Consider the following 39-residue polypeptide: U1-nemetoxin-Csp1c (39 aa).

4 cysteine pairs are disulfide-bonded: C1-C15, C8-C19, C14-C36, and C25-C32.

In terms of tissue distribution, expressed by the venom gland.

It localises to the secreted. Its function is as follows. Causes paralysis to insect larvae (H.virescens). This toxin is active only on insects. In Calisoga sp. (Spider), this protein is U1-nemetoxin-Csp1c.